The following is a 364-amino-acid chain: Caveolae-associated protein 4 (364 aa).

The segment at 1-24 (MEHNGSASNADKIHQNRLSSVTED) is disordered. The stretch at 44-77 (VDSVQASQKRIEERHREMENAIKSVQIDLLKLSQ) forms a coiled coil. Ser-172 and Ser-173 each carry phosphoserine. Residues 202–226 (FSKENMQKTRQNLDKKVNRIRTRIV) adopt a coiled-coil conformation. Residues 231–256 (RERLRQSGERLRQSGERLRQSGERFK) show a composition bias toward basic and acidic residues. Disordered regions lie at residues 231-283 (RERL…RTVA) and 311-339 (SDELSEPEHEAARPVYPPHEGREIPTPEP). Tyr-326 carries the post-translational modification Phosphotyrosine. Thr-336 carries the post-translational modification Phosphothreonine. Residue Ser-355 is modified to Phosphoserine.

It belongs to the CAVIN family. As to quaternary structure, component of the CAVIN complex composed of CAVIN1, CAVIN2, CAVIN3 and CAVIN4. Interacts with CAVIN1, ADRA1A and ADRA1B. Interacts with CAVIN2; this augments the transactivation of NPPA. Interacts with CAV3. Interacts with MAPK1 and MAPK3.

The protein resides in the cytoplasm. It is found in the myofibril. It localises to the sarcomere. The protein localises to the cytosol. Its subcellular location is the cell membrane. The protein resides in the sarcolemma. It is found in the membrane. It localises to the caveola. Functionally, modulates the morphology of formed caveolae in cardiomyocytes, but is not required for caveolar formation. Facilitates the recruitment of MAPK1/3 to caveolae within cardiomyocytes and regulates alpha-1 adrenergic receptor-induced hypertrophic responses in cardiomyocytes through MAPK1/3 activation. Contributes to proper membrane localization and stabilization of caveolin-3 (CAV3) in cardiomyocytes. Induces RHOA activation and activates NPPA transcription and myofibrillar organization through the Rho/ROCK signaling pathway. This Homo sapiens (Human) protein is Caveolae-associated protein 4.